A 289-amino-acid chain; its full sequence is MDVGFSGLPDVSQSHSKTLWGARGRGPSIRRQREFMPEEKKDTVYWEKRRKNNEAAKRSREKRRLNDAAIEGRLAALMEENALLKGELKALKLRFGLLPLTGGPRALPLQALLLEAPWTGDPRPGAEALSSLSGSHSCLLRPRSLDAGIPGCRGCLLAPRWTGLATSPRSPQESASPTLNRIDMALQTALPPALFSCHLLEGHVGSRPELRPCWGLWSPVPSGCRASGPSDVLLTPTADPMGLSPGVTCPAPGNSPEGLGQPSLPHKLRIKSRASGRVPRGWEGGQAPL.

The disordered stretch occupies residues 1 to 27; the sequence is MDVGFSGLPDVSQSHSKTLWGARGRGP. The bZIP domain maps to 42 to 105; sequence DTVYWEKRRK…GLLPLTGGPR (64 aa). Residues 48-64 form a basic motif region; the sequence is KRRKNNEAAKRSREKRR. Positions 70–91 are leucine-zipper; the sequence is IEGRLAALMEENALLKGELKAL.

It belongs to the bZIP family. NFIL3 subfamily.

It is found in the nucleus. This Homo sapiens (Human) protein is NFIL3 like protein.